The chain runs to 425 residues: Serine hydroxymethyltransferase (425 aa).

(6S)-5,6,7,8-tetrahydrofolate-binding positions include Leu-124 and 128 to 130; that span reads GHL. Position 233 is an N6-(pyridoxal phosphate)lysine (Lys-233).

It belongs to the SHMT family. Homodimer. Pyridoxal 5'-phosphate serves as cofactor.

The protein localises to the cytoplasm. It catalyses the reaction (6R)-5,10-methylene-5,6,7,8-tetrahydrofolate + glycine + H2O = (6S)-5,6,7,8-tetrahydrofolate + L-serine. Its pathway is one-carbon metabolism; tetrahydrofolate interconversion. The protein operates within amino-acid biosynthesis; glycine biosynthesis; glycine from L-serine: step 1/1. Catalyzes the reversible interconversion of serine and glycine with tetrahydrofolate (THF) serving as the one-carbon carrier. This reaction serves as the major source of one-carbon groups required for the biosynthesis of purines, thymidylate, methionine, and other important biomolecules. Also exhibits THF-independent aldolase activity toward beta-hydroxyamino acids, producing glycine and aldehydes, via a retro-aldol mechanism. This chain is Serine hydroxymethyltransferase, found in Clavibacter michiganensis subsp. michiganensis (strain NCPPB 382).